The chain runs to 558 residues: PE cleavage protein A (558 aa).

A PE domain is found at 1–93; the sequence is MSFLVVVPEF…SGSYAAAEAT (93 aa). The active site involves aspartate 297.

Belongs to the mycobacterial PE family. PGRS subfamily. Post-translationally, undergoes auto-proteolytic processing.

The protein localises to the secreted. It is found in the cell surface. Its function is as follows. Aspartic protease that processes the lipase LipY and other PE_PGRS proteins. Can also cleave itself. In Mycobacterium tuberculosis (strain CDC 1551 / Oshkosh), this protein is PE cleavage protein A.